Consider the following 427-residue polypeptide: Light-independent protochlorophyllide reductase subunit N (427 aa).

Residues C28, C53, and C114 each contribute to the [4Fe-4S] cluster site.

The protein belongs to the BchN/ChlN family. Protochlorophyllide reductase is composed of three subunits; BchL, BchN and BchB. Forms a heterotetramer of two BchB and two BchN subunits. The cofactor is [4Fe-4S] cluster.

It catalyses the reaction chlorophyllide a + oxidized 2[4Fe-4S]-[ferredoxin] + 2 ADP + 2 phosphate = protochlorophyllide a + reduced 2[4Fe-4S]-[ferredoxin] + 2 ATP + 2 H2O. It participates in porphyrin-containing compound metabolism; bacteriochlorophyll biosynthesis (light-independent). In terms of biological role, component of the dark-operative protochlorophyllide reductase (DPOR) that uses Mg-ATP and reduced ferredoxin to reduce ring D of protochlorophyllide (Pchlide) to form chlorophyllide a (Chlide). This reaction is light-independent. The NB-protein (BchN-BchB) is the catalytic component of the complex. This is Light-independent protochlorophyllide reductase subunit N from Jannaschia sp. (strain CCS1).